The following is a 252-amino-acid chain: 5'-nucleotidase SurE (252 aa).

A divalent metal cation is bound by residues Asp8, Asp9, Ser39, and Asn91.

The protein belongs to the SurE nucleotidase family. A divalent metal cation is required as a cofactor.

It is found in the cytoplasm. It carries out the reaction a ribonucleoside 5'-phosphate + H2O = a ribonucleoside + phosphate. In terms of biological role, nucleotidase that shows phosphatase activity on nucleoside 5'-monophosphates. The sequence is that of 5'-nucleotidase SurE from Variovorax paradoxus (strain S110).